The following is a 73-amino-acid chain: UPF0057 membrane protein At4g30650 (73 aa).

2 helical membrane-spanning segments follow: residues 4–24 and 37–57; these read NMEV…GVCL and LVLT…VIVF.

Belongs to the UPF0057 (PMP3) family.

The protein localises to the membrane. The sequence is that of UPF0057 membrane protein At4g30650 from Arabidopsis thaliana (Mouse-ear cress).